Here is a 695-residue protein sequence, read N- to C-terminus: uncharacterized protein (695 aa).

Disordered regions lie at residues Met1–Lys112 and Met242–His262. Over residues Asp32–Ser47 the composition is skewed to low complexity. The segment covering Lys96–Gln107 has biased composition (basic and acidic residues). Positions Lys278 to His492 constitute a tr-type G domain. GTP-binding positions include Gly287 to Lys294, Ile357 to Asn361, and Thr417 to Asp420.

This sequence belongs to the TRAFAC class translation factor GTPase superfamily. Classic translation factor GTPase family.

The protein localises to the cytoplasm. It is found in the nucleus. This is an uncharacterized protein from Schizosaccharomyces pombe (strain 972 / ATCC 24843) (Fission yeast).